Reading from the N-terminus, the 235-residue chain is Small ribosomal subunit protein uS2 (235 aa).

The protein belongs to the universal ribosomal protein uS2 family.

The sequence is that of Small ribosomal subunit protein uS2 from Caldanaerobacter subterraneus subsp. tengcongensis (strain DSM 15242 / JCM 11007 / NBRC 100824 / MB4) (Thermoanaerobacter tengcongensis).